The following is a 520-amino-acid chain: CBL-interacting serine/threonine-protein kinase 18 (520 aa).

Disordered regions lie at residues 1–29 (MAQALAQPPLVVTTVVPDPPPPPPPPHPK) and 48–67 (TDKDGNISPQSPRSPRSPRN). Pro residues predominate over residues 17–29 (PDPPPPPPPPHPK). Residues 55 to 66 (SPQSPRSPRSPR) are compositionally biased toward low complexity. Residues 74-328 (YELGKLLGHG…IPEIMKNRWF (255 aa)) form the Protein kinase domain. ATP-binding positions include 80 to 88 (LGHGTFAKV) and Lys-103. The active-site Proton acceptor is Asp-196. The segment at 214 to 243 (DFGLSAVAEQLRQDGLCHTFCGTPAYIAPE) is activation loop. Phosphoserine is present on Ser-218. Phosphothreonine is present on Thr-232. A disordered region spans residues 349–368 (EDEEEEASSSGRSSTVSESD). Residues 356–366 (SSSGRSSTVSE) are compositionally biased toward low complexity. Residues 382 to 406 (PRPSSLNAFDIISFSSGFDLSGLFE) enclose the NAF domain. The segment at 410 to 439 (GEGTRFVSGAPVSKIISKLEEIAKIVSFTV) is PPI.

It belongs to the protein kinase superfamily. CAMK Ser/Thr protein kinase family. SNF1 subfamily. Interacts with CBL1 and CBL9. Mn(2+) is required as a cofactor.

It carries out the reaction L-seryl-[protein] + ATP = O-phospho-L-seryl-[protein] + ADP + H(+). The enzyme catalyses L-threonyl-[protein] + ATP = O-phospho-L-threonyl-[protein] + ADP + H(+). Functionally, CIPK serine-threonine protein kinases interact with CBL proteins. Binding of a CBL protein to the regulatory NAF domain of CIPK protein lead to the activation of the kinase in a calcium-dependent manner. This Arabidopsis thaliana (Mouse-ear cress) protein is CBL-interacting serine/threonine-protein kinase 18 (CIPK18).